We begin with the raw amino-acid sequence, 114 residues long: Fluoride-specific ion channel FluC 2 (114 aa).

Helical transmembrane passes span 30–50 (FPVATFLVNVAGCLILGLLSG), 57–77 (TFALLGTGFCGGLTTYSTFAV), and 88–108 (ALPSVVYVVASVAAGLAAAWL). Na(+) is bound by residues G67 and T70.

It belongs to the fluoride channel Fluc/FEX (TC 1.A.43) family.

It localises to the cell membrane. It carries out the reaction fluoride(in) = fluoride(out). With respect to regulation, na(+) is not transported, but it plays an essential structural role and its presence is essential for fluoride channel function. In terms of biological role, fluoride-specific ion channel. Important for reducing fluoride concentration in the cell, thus reducing its toxicity. The polypeptide is Fluoride-specific ion channel FluC 2 (Rhodococcus jostii (strain RHA1)).